Consider the following 536-residue polypeptide: GPI alpha-1,2-mannosyltransferase 3 (536 aa).

A glycan (N-linked (GlcNAc...) asparagine) is linked at Asn-15. The next 2 membrane-spanning stretches (helical) occupy residues 40 to 60 and 118 to 138; these read IFGI…CVLV and VYLL…YADV. Asn-176 carries an N-linked (GlcNAc...) asparagine glycan. The next 6 helical transmembrane spans lie at 206–226, 243–263, 297–317, 322–342, 344–364, and 369–389; these read LVSL…PLIF, YFPI…FFYG, GLPV…LLST, ILLL…HKEF, FIYP…AKLQ, and AAAG…GLVH. N-linked (GlcNAc...) asparagine glycosylation occurs at Asn-467.

Belongs to the glycosyltransferase 22 family. PIGB subfamily.

Its subcellular location is the endoplasmic reticulum membrane. It functions in the pathway glycolipid biosynthesis; glycosylphosphatidylinositol-anchor biosynthesis. Functionally, alpha-1,2-mannosyltransferase that catalyzes the transfer of the third mannose, via an alpha-1,2 bond, from a dolichol-phosphate-mannose (Dol-P-Man) to an alpha-D-Man-(1-&gt;6)-2-PEtn-alpha-D-Man-(1-&gt;4)-alpha-D-GlcN-(1-&gt;6)-(1-radyl,2-acyl-sn-glycero-3-phospho)-2-acyl-inositol intermediate to generate an alpha-D-Man-(1-&gt;2)-alpha-D-Man-(1-&gt;6)-2-PEtn-alpha-D-Man-(1-&gt;4)-alpha-D-GlcN-(1-&gt;6)-(1-radyl,2-acyl-sn-glycero-3-phospho)-2-acyl-inositol (also termed H6) and participates in the nineth step of the glycosylphosphatidylinositol-anchor biosynthesis. May also add the third mannose to an alpha-D-Man-(1-&gt;6)-alpha-D-Man-(1-&gt;4)-alpha-D-GlcN-(1-&gt;6)-(1-radyl,2-acyl-sn-glycero-3-phospho)-2-acyl-inositol (also termed H3) intermediate generating an alpha-D-Man-(1-&gt;2)-alpha-D-Man-(1-&gt;6)-alpha-D-Man-(1-&gt;4)-alpha-D-GlcN-(1-&gt;6)-(1-radyl,2-acyl-sn-glycero-3-phospho)-2-acyl-inositol (also termed H4). The protein is GPI alpha-1,2-mannosyltransferase 3 of Danio rerio (Zebrafish).